The following is a 151-amino-acid chain: Transcriptional regulator MraZ (151 aa).

2 SpoVT-AbrB domains span residues 5–56 (THRH…PLPT) and 85–128 (SEEL…DAAR).

The protein belongs to the MraZ family. As to quaternary structure, forms oligomers.

It localises to the cytoplasm. It is found in the nucleoid. The chain is Transcriptional regulator MraZ from Acidithiobacillus ferrooxidans (strain ATCC 23270 / DSM 14882 / CIP 104768 / NCIMB 8455) (Ferrobacillus ferrooxidans (strain ATCC 23270)).